The sequence spans 485 residues: Chromosomal replication initiator protein DnaA (485 aa).

A domain I, interacts with DnaA modulators region spans residues 1 to 74 (MEKSKNIWSL…ILTNNGYDNV (74 aa)). The segment at 74 to 140 (VTIVFTNQSP…EEEPKNFKNP (67 aa)) is domain II. The tract at residues 141–357 (FLKKRYTFEN…AAVTKLKAYI (217 aa)) is domain III, AAA+ region. ATP is bound by residues Gly185, Gly187, Lys188, and Thr189. A domain IV, binds dsDNA region spans residues 358–485 (DLDNIEIDID…TELMNKIKKN (128 aa)).

Belongs to the DnaA family. Oligomerizes as a right-handed, spiral filament on DNA at oriC.

It is found in the cytoplasm. Its function is as follows. Plays an essential role in the initiation and regulation of chromosomal replication. ATP-DnaA binds to the origin of replication (oriC) to initiate formation of the DNA replication initiation complex once per cell cycle. Binds the DnaA box (a 9 base pair repeat at the origin) and separates the double-stranded (ds)DNA. Forms a right-handed helical filament on oriC DNA; dsDNA binds to the exterior of the filament while single-stranded (ss)DNA is stabiized in the filament's interior. The ATP-DnaA-oriC complex binds and stabilizes one strand of the AT-rich DNA unwinding element (DUE), permitting loading of DNA polymerase. After initiation quickly degrades to an ADP-DnaA complex that is not apt for DNA replication. Binds acidic phospholipids. In Borreliella afzelii (strain PKo) (Borrelia afzelii), this protein is Chromosomal replication initiator protein DnaA.